Reading from the N-terminus, the 1476-residue chain is Membrane-associated guanylate kinase, WW and PDZ domain-containing protein 3 (1476 aa).

The region spanning 18–108 (CAVSWAGPPG…PIRLKTVKPG (91 aa)) is the PDZ 1 domain. The interaction with ADRB1 and TGFA stretch occupies residues 18 to 108 (CAVSWAGPPG…PIRLKTVKPG (91 aa)). The Guanylate kinase-like domain maps to 116 to 290 (RHYLSLQFQK…SSMDFRNYMM (175 aa)). 123–130 (FQKGSIDH) is an ATP binding site. Positions 184–266 (TYDGNFYGTP…ETREMHSETS (83 aa)) are disordered. Residues 193 to 204 (PKPPAEPSPFQP) are compositionally biased toward pro residues. S236 is modified (phosphoserine). Positions 238–247 (LPEEEEDEDK) are enriched in acidic residues. 2 consecutive WW domains span residues 296–329 (EPLP…DPRL) and 342–375 (GELP…NPVE). Residues 413–495 (RASLKKSTMG…NQYVNLTLCR (83 aa)) enclose the PDZ 2 domain. The interaction with PTEN stretch occupies residues 413-495 (RASLKKSTMG…NQYVNLTLCR (83 aa)). The segment at 551 to 575 (LASDRLNGPSESSEQRASLASSGSS) is disordered. The span at 559–575 (PSESSEQRASLASSGSS) shows a compositional bias: polar residues. One can recognise a PDZ 3 domain in the interval 581–657 (TIPLIKGPKG…GADVPLLILR (77 aa)). S598 carries the post-translational modification Phosphoserine. Residues 664-691 (TKTAKTKTDTKENSGSLETINEPIPQPM) form a disordered region. S702 is modified (phosphoserine). Residues 729–811 (DVFLRKQESG…NGHVLLTVRR (83 aa)) enclose the PDZ 4 domain. An interaction with ADGRB1 region spans residues 729–811 (DVFLRKQESG…NGHVLLTVRR (83 aa)). The disordered stretch occupies residues 818–844 (KQPEDESHQAFSQNGSPRLNRAELPTR). Phosphoserine is present on residues S833 and S916. A PDZ 5 domain is found at 852-939 (DVTLQRKENE…TVTLTVVAEE (88 aa)). The interaction with LPAR2 and GRIN2B stretch occupies residues 852 to 939 (DVTLQRKENE…TVTLTVVAEE (88 aa)). A disordered region spans residues 939 to 966 (EEHHGPPSGTNSARQSPALQHRPMGQAQ). A compositionally biased stretch (polar residues) spans 946 to 956 (SGTNSARQSPA). The region spanning 1022 to 1104 (PVELERGPRG…KVLLLLRPGT (83 aa)) is the PDZ 6 domain. 2 disordered regions span residues 1109–1151 (DHGD…ATED) and 1168–1476 (TVQE…DKQL). Residues 1114–1123 (DTNSPSSSNV) show a composition bias toward polar residues. Basic and acidic residues-rich tracts occupy residues 1193–1211 (SKKD…RLKG) and 1230–1265 (RHSE…ESKG). Residues 1285–1304 (SSSPKKQQKIGGNSLSNTEG) show a composition bias toward polar residues. Composition is skewed to basic and acidic residues over residues 1317 to 1340 (HPRD…KDLK) and 1350 to 1361 (KSPEKKSSKVDE). Position 1321 is a phosphoserine (S1321). The segment covering 1363–1373 (SLPSKKTSSTA) has biased composition (polar residues). Positions 1419–1437 (ADDHKGRESEVTDRCRERA) are enriched in basic and acidic residues.

It belongs to the MAGUK family. Interacts with ADRB1, ADGRB1, LPAR2/EDG4, GRIN2B, PTEN, and PTPRB. Interacts with unidentified tyrosine phosphorylated proteins. Interacts with FZD4, FZD7, TGFA and VANGL2. Interacts with DLL1. Interacts with PRRG4 (via cytoplasmic domain). Widely expressed. Colocalizes with TGFA in neurons in the cortex and dentate gyrus, as well as in ependymal cells and some astrocytes (at protein level). Present in lens epithelium.

It is found in the cell membrane. Its subcellular location is the cell junction. It localises to the tight junction. The protein localises to the nucleus. Acts as a scaffolding protein at cell-cell junctions, thereby regulating various cellular and signaling processes. Cooperates with PTEN to modulate the kinase activity of AKT1. Its interaction with PTPRB and tyrosine phosphorylated proteins suggests that it may link receptor tyrosine phosphatase with its substrates at the plasma membrane. In polarized epithelial cells, involved in efficient trafficking of TGFA to the cell surface. Regulates the ability of LPAR2 to activate ERK and RhoA pathways. Regulates the JNK signaling cascade via its interaction with FZD4 and VANGL2. In Mus musculus (Mouse), this protein is Membrane-associated guanylate kinase, WW and PDZ domain-containing protein 3 (Magi3).